Here is a 427-residue protein sequence, read N- to C-terminus: Serine hydroxymethyltransferase (427 aa).

(6S)-5,6,7,8-tetrahydrofolate-binding positions include Leu-122 and 126–128; that span reads GHL. Lys-231 is modified (N6-(pyridoxal phosphate)lysine). (6S)-5,6,7,8-tetrahydrofolate contacts are provided by residues Glu-247 and 355 to 357; that span reads SPF.

It belongs to the SHMT family. In terms of assembly, homodimer. The cofactor is pyridoxal 5'-phosphate.

The protein localises to the cytoplasm. It carries out the reaction (6R)-5,10-methylene-5,6,7,8-tetrahydrofolate + glycine + H2O = (6S)-5,6,7,8-tetrahydrofolate + L-serine. The protein operates within one-carbon metabolism; tetrahydrofolate interconversion. It participates in amino-acid biosynthesis; glycine biosynthesis; glycine from L-serine: step 1/1. Its function is as follows. Catalyzes the reversible interconversion of serine and glycine with tetrahydrofolate (THF) serving as the one-carbon carrier. This reaction serves as the major source of one-carbon groups required for the biosynthesis of purines, thymidylate, methionine, and other important biomolecules. Also exhibits THF-independent aldolase activity toward beta-hydroxyamino acids, producing glycine and aldehydes, via a retro-aldol mechanism. The chain is Serine hydroxymethyltransferase from Crocosphaera subtropica (strain ATCC 51142 / BH68) (Cyanothece sp. (strain ATCC 51142)).